The primary structure comprises 108 residues: UPF0145 protein SYNPCC7002_A1337 (108 aa).

Belongs to the UPF0145 family.

The polypeptide is UPF0145 protein SYNPCC7002_A1337 (Picosynechococcus sp. (strain ATCC 27264 / PCC 7002 / PR-6) (Agmenellum quadruplicatum)).